The chain runs to 123 residues: DNA-directed RNA polymerase I subunit RPA12 (123 aa).

C17, C20, C35, C38, C84, and C87 together coordinate Zn(2+). The C4-type zinc finger occupies 17–38; it reads CPDCGSVLPLPGIQDTVICSRC. The TFIIS-type zinc finger occupies 80-120; sequence IDRRCPRCGHEGMAYHTRQMRSADEGQTVFYTCINCKFQEK. Positions 103 to 104 match the Hairpin motif; it reads DE. C112 and C115 together coordinate Zn(2+).

The protein belongs to the archaeal RpoM/eukaryotic RPA12/RPB9/RPC11 RNA polymerase family. In terms of assembly, component of the RNA polymerase I (Pol I) complex consisting of 13 subunits: a ten-subunit catalytic core composed of POLR1A/RPA1, POLR1B/RPA2, POLR1C/RPAC1, POLR1D/RPAC2, POLR1H/RPA12, POLR2E/RPABC1, POLR2F/RPABC2, POLR2H/RPABC3, POLR2K/RPABC4 and POLR2L/RPABC5; a mobile stalk subunit POLR1F/RPA43 protruding from the core and additional subunits homologous to general transcription factors POLR1E/RPA49 and POLR1G/RPA34. Part of Pol I pre-initiation complex (PIC), in which Pol I core assembles with RRN3 and promoter-bound UTBF and SL1/TIF-IB complex.

The protein resides in the nucleus. It is found in the nucleolus. Core component of RNA polymerase I (Pol I), a DNA-dependent RNA polymerase which synthesizes ribosomal RNA precursors using the four ribonucleoside triphosphates as substrates. Can mediate Pol I proofreading of the nascent RNA transcript. Anchors into the Pol I active site to monitor transcription fidelity and cleave mis-incorporated 5'-ribonucleotides. The protein is DNA-directed RNA polymerase I subunit RPA12 of Mus musculus (Mouse).